A 900-amino-acid chain; its full sequence is Alanine--tRNA ligase (900 aa).

Positions 568, 572, 672, and 676 each coordinate Zn(2+).

The protein belongs to the class-II aminoacyl-tRNA synthetase family. Zn(2+) is required as a cofactor.

Its subcellular location is the cytoplasm. It carries out the reaction tRNA(Ala) + L-alanine + ATP = L-alanyl-tRNA(Ala) + AMP + diphosphate. Its function is as follows. Catalyzes the attachment of alanine to tRNA(Ala) in a two-step reaction: alanine is first activated by ATP to form Ala-AMP and then transferred to the acceptor end of tRNA(Ala). Also edits incorrectly charged Ser-tRNA(Ala) and Gly-tRNA(Ala) via its editing domain. This chain is Alanine--tRNA ligase, found in Mycoplasma genitalium (strain ATCC 33530 / DSM 19775 / NCTC 10195 / G37) (Mycoplasmoides genitalium).